We begin with the raw amino-acid sequence, 284 residues long: MEMO1 family protein Saci_0089 (284 aa).

The protein belongs to the MEMO1 family.

This chain is MEMO1 family protein Saci_0089, found in Sulfolobus acidocaldarius (strain ATCC 33909 / DSM 639 / JCM 8929 / NBRC 15157 / NCIMB 11770).